Here is a 625-residue protein sequence, read N- to C-terminus: DNA mismatch repair protein MutL (625 aa).

Belongs to the DNA mismatch repair MutL/HexB family.

This protein is involved in the repair of mismatches in DNA. It is required for dam-dependent methyl-directed DNA mismatch repair. May act as a 'molecular matchmaker', a protein that promotes the formation of a stable complex between two or more DNA-binding proteins in an ATP-dependent manner without itself being part of a final effector complex. In Azorhizobium caulinodans (strain ATCC 43989 / DSM 5975 / JCM 20966 / LMG 6465 / NBRC 14845 / NCIMB 13405 / ORS 571), this protein is DNA mismatch repair protein MutL.